Here is a 464-residue protein sequence, read N- to C-terminus: IAA-amino acid hydrolase ILR1-like 6 (464 aa).

An N-terminal signal peptide occupies residues 1–24 (MDNLRKLNLLSVSLTIIFVSLTIA). Residues cysteine 175, histidine 177, glutamate 211, histidine 235, and histidine 433 each coordinate Mn(2+).

The protein belongs to the peptidase M20 family.

It carries out the reaction a jasmonyl-L-amino acid + H2O = a jasmonate + an L-alpha-amino acid. Hydrolyzes certain amino acid conjugates of the plant growth regulator indole-3-acetic acid (IAA). Also hydrolyzes amino acid conjugates of jasmonic acid and 12-hydroxy jasmonic acid. In Arabidopsis thaliana (Mouse-ear cress), this protein is IAA-amino acid hydrolase ILR1-like 6.